Consider the following 84-residue polypeptide: MAEDPQDIADRERIFKRFDLNGDGKISSAELGETLKMLGSVTSEEVQHMMAELDTDGDGFISYEEFEEFARANRGLIKDVAKVF.

EF-hand domains lie at 6-40 (QDIA…MLGS) and 41-76 (VTSE…NRGL). 9 residues coordinate Ca(2+): aspartate 19, asparagine 21, aspartate 23, lysine 25, glutamate 30, aspartate 54, aspartate 56, aspartate 58, and glutamate 65.

The chain is Polcalcin Nic t 1 (Nict1) from Nicotiana tabacum (Common tobacco).